Reading from the N-terminus, the 424-residue chain is Serine--tRNA ligase (424 aa).

Residue 232-234 participates in L-serine binding; the sequence is TAE. Residue 263–265 coordinates ATP; sequence RKE. Glu-286 contacts L-serine. Residue 350 to 353 participates in ATP binding; that stretch reads EISS. Ser-386 contacts L-serine.

The protein belongs to the class-II aminoacyl-tRNA synthetase family. Type-1 seryl-tRNA synthetase subfamily. In terms of assembly, homodimer. The tRNA molecule binds across the dimer.

It is found in the cytoplasm. It carries out the reaction tRNA(Ser) + L-serine + ATP = L-seryl-tRNA(Ser) + AMP + diphosphate + H(+). The enzyme catalyses tRNA(Sec) + L-serine + ATP = L-seryl-tRNA(Sec) + AMP + diphosphate + H(+). Its pathway is aminoacyl-tRNA biosynthesis; selenocysteinyl-tRNA(Sec) biosynthesis; L-seryl-tRNA(Sec) from L-serine and tRNA(Sec): step 1/1. Functionally, catalyzes the attachment of serine to tRNA(Ser). Is also able to aminoacylate tRNA(Sec) with serine, to form the misacylated tRNA L-seryl-tRNA(Sec), which will be further converted into selenocysteinyl-tRNA(Sec). In Thermodesulfovibrio yellowstonii (strain ATCC 51303 / DSM 11347 / YP87), this protein is Serine--tRNA ligase.